The sequence spans 310 residues: MAGAAPTTAFGQAVIGPPGSGKTTYCLGMSEFLRALGRRVAVVNLDPANDGLPYECAVDVGELVGLGDVMDALRLGPNGGLLYCMEYLEANLDWLRAKLEPLRGHYFLFDCPGQVELCTHHTALRSIFSQMAQWDLRLTAVHLVDSHYCTDPAKFISVLCTSLATMLHVELPHINLLSKMDLIEHYGKLAFNLDYYTEVLDLSYLLEHLASDPFFRRYRQLNEKLVQLVEDYSLVSFIPLNIQDKDSIQRVLQAVDKANGYCFGVQEQRSLEAMMSAAMGADFHFSSTLGIQEKYLAPSEQTAEQEAMQL.

Residue Ala2 is modified to N-acetylalanine. A GTP-binding site is contributed by 19-24 (GSGKTT). The Gly-Pro-Asn (GPN)-loop; involved in dimer interface motif lies at 76 to 78 (GPN). 178-181 (SKMD) lines the GTP pocket.

The protein belongs to the GPN-loop GTPase family. Heterodimers with GPN1 or GPN3. Binds to RNA polymerase II (RNAPII).

In terms of biological role, small GTPase required for proper localization of RNA polymerase II and III (RNAPII and RNAPIII). May act at an RNAP assembly step prior to nuclear import. The protein is GPN-loop GTPase 2 of Mus musculus (Mouse).